Consider the following 330-residue polypeptide: Probable cytosolic iron-sulfur protein assembly protein ciao1-A (330 aa).

7 WD repeats span residues 14 to 53 (HPDSRCWYVAWNPKGTLLASCGGDRAIRIWGREGDSWECK), 59 to 98 (GHQRAVRKVAWSPCGNYLASASFDATTCIWKKKNDDFECL), 103 to 142 (GHENEVKCVAWAPSGNQLATCSRDKSVWIWEVDEEDEYEC), 148 to 187 (SHTQDVKHVVWHPTQELLASCSYDNNVCVYKEEDDDWECR), 192 to 231 (GHTSTVWGLTFDPSGQRLASCSDDRTVKIWKECQPGGGQD), 243 to 282 (FHGRTVYDIAWCPLTGALATACGDDGVRVFKEDETADPDQ), and 294 to 330 (AHSQDVNCIAWHPKEAGLLVSCSDNGEIAVWNYQSEV).

It belongs to the WD repeat CIA1 family. Component of the CIA complex.

Its function is as follows. Key component of the cytosolic iron-sulfur protein assembly (CIA) complex, a multiprotein complex that mediates the incorporation of iron-sulfur cluster into extramitochondrial Fe/S proteins. This chain is Probable cytosolic iron-sulfur protein assembly protein ciao1-A (ciao1a), found in Salmo salar (Atlantic salmon).